The chain runs to 217 residues: N-(5'-phosphoribosyl)anthranilate isomerase (217 aa).

It belongs to the TrpF family.

It catalyses the reaction N-(5-phospho-beta-D-ribosyl)anthranilate = 1-(2-carboxyphenylamino)-1-deoxy-D-ribulose 5-phosphate. Its pathway is amino-acid biosynthesis; L-tryptophan biosynthesis; L-tryptophan from chorismate: step 3/5. In Bacillus velezensis (strain DSM 23117 / BGSC 10A6 / LMG 26770 / FZB42) (Bacillus amyloliquefaciens subsp. plantarum), this protein is N-(5'-phosphoribosyl)anthranilate isomerase.